The chain runs to 159 residues: Nucleotide-binding protein PLES_47741 (159 aa).

The protein belongs to the YajQ family.

Its function is as follows. Nucleotide-binding protein. This chain is Nucleotide-binding protein PLES_47741, found in Pseudomonas aeruginosa (strain LESB58).